We begin with the raw amino-acid sequence, 109 residues long: Protein reprimo (109 aa).

Asn-7 and Asn-18 each carry an N-linked (GlcNAc...) asparagine glycan. Residues 56–76 (VVQIAVMCVLSLTVVFGIFFL) traverse the membrane as a helical segment. Residue Ser-98 is modified to Phosphoserine.

Belongs to the reprimo family.

It localises to the cytoplasm. It is found in the membrane. Functionally, may be involved in the regulation of p53-dependent G2 arrest of the cell cycle. Seems to induce cell cycle arrest by inhibiting CDK1 activity and nuclear translocation of the CDC2 cyclin B1 complex. This chain is Protein reprimo (Rprm), found in Mus musculus (Mouse).